Reading from the N-terminus, the 474-residue chain is MSIKHWMASSVSVTALVMTALLNITAVSAEEKGLVDPRNDAFEQNHPDQYQSWKKTSESVEIEDALAEDPNMVILWAGYGFAKDYNKARGHFYALDDVRQTLRTGGPQDAKSGPMPMACWSCKSPDVARVIDERGEDGYFEGKWARLGAEIANPIGCADCHDTRSEKFKNGEPELALTRPYVERAFQAINKPFEQQSRLDKQASVCAQCHVEYYFTGPTKAVKFPWDMGTGVQQMEEYYDALGFADWTHAVSKAPMLKAQHPGFETWREGIHGKNKVVCVDCHMPKVKKEDGTVYTDHKVGNPFDRFEDTCAQCHTQSKDQLREIVSTRKAQVLNMKLTAEKQIVAAHFEAGAAWKAGATEEEMKPILQDIRHAQWRWDYAIASHGVHMHAPEVALEVLGTAVDRAADARTKLVRLLATKGITEPVQIPDISTKAAAQKALGMDMEKMNAEKQHFLKTVVPDWDKAAAERESKY.

An N-terminal signal peptide occupies residues 1 to 29 (MSIKHWMASSVSVTALVMTALLNITAVSA). Histidine 91 lines the heme c pocket. Positions 119, 122, and 123 each coordinate heme. Residues cysteine 157, cysteine 160, histidine 161, cysteine 206, cysteine 209, and histidine 210 each coordinate heme c. Residues glutamate 212, tyrosine 213, lysine 258, and glutamine 260 each coordinate Ca(2+). Tyrosine 213 contributes to the substrate binding site. A substrate-binding site is contributed by histidine 261. Residues histidine 272, cysteine 279, cysteine 282, histidine 283, histidine 298, cysteine 311, cysteine 314, histidine 315, and histidine 390 each coordinate heme c.

The protein belongs to the cytochrome c-552 family. Ca(2+) is required as a cofactor. The cofactor is heme c.

The protein localises to the periplasm. The enzyme catalyses 6 Fe(III)-[cytochrome c] + NH4(+) + 2 H2O = 6 Fe(II)-[cytochrome c] + nitrite + 8 H(+). It participates in nitrogen metabolism; nitrate reduction (assimilation). In terms of biological role, catalyzes the reduction of nitrite to ammonia, consuming six electrons in the process. The chain is Cytochrome c-552 from Vibrio vulnificus (strain CMCP6).